We begin with the raw amino-acid sequence, 430 residues long: WD repeat-containing protein jip5 (430 aa).

WD repeat units follow at residues 9–48, 72–111, 117–158, 215–262, 272–318, and 323–360; these read PLSS…AAAE, RHKG…VTSK, TNTD…SFKS, DQEE…DQSE, AGGE…GVVE, and DDIE…EEEE. A compositionally biased stretch (acidic residues) spans 356 to 374; that stretch reads EEEEEEEEEEQEDIEDNDD. Residues 356-430 form a disordered region; it reads EEEEEEEEEE…NGILKFKGME (75 aa). Residues 382 to 397 are compositionally biased toward basic and acidic residues; that stretch reads HALERDSDDSDARADS. Positions 405–416 are enriched in basic residues; that stretch reads RKKRKKKKKGKK.

The protein belongs to the WD repeat WDR55 family.

The protein localises to the nucleus. The protein resides in the nucleolus. In Botryotinia fuckeliana (strain B05.10) (Noble rot fungus), this protein is WD repeat-containing protein jip5 (jip5).